The following is a 168-amino-acid chain: Crossover junction endodeoxyribonuclease RuvC (168 aa).

Active-site residues include Asp-7, Glu-64, and Asp-136. 3 residues coordinate Mg(2+): Asp-7, Glu-64, and Asp-136.

Belongs to the RuvC family. Homodimer which binds Holliday junction (HJ) DNA. The HJ becomes 2-fold symmetrical on binding to RuvC with unstacked arms; it has a different conformation from HJ DNA in complex with RuvA. In the full resolvosome a probable DNA-RuvA(4)-RuvB(12)-RuvC(2) complex forms which resolves the HJ. Mg(2+) serves as cofactor.

The protein localises to the cytoplasm. It catalyses the reaction Endonucleolytic cleavage at a junction such as a reciprocal single-stranded crossover between two homologous DNA duplexes (Holliday junction).. Functionally, the RuvA-RuvB-RuvC complex processes Holliday junction (HJ) DNA during genetic recombination and DNA repair. Endonuclease that resolves HJ intermediates. Cleaves cruciform DNA by making single-stranded nicks across the HJ at symmetrical positions within the homologous arms, yielding a 5'-phosphate and a 3'-hydroxyl group; requires a central core of homology in the junction. The consensus cleavage sequence is 5'-(A/T)TT(C/G)-3'. Cleavage occurs on the 3'-side of the TT dinucleotide at the point of strand exchange. HJ branch migration catalyzed by RuvA-RuvB allows RuvC to scan DNA until it finds its consensus sequence, where it cleaves and resolves the cruciform DNA. This Polynucleobacter necessarius subsp. necessarius (strain STIR1) protein is Crossover junction endodeoxyribonuclease RuvC.